Consider the following 285-residue polypeptide: Bifunctional protein FolD (285 aa).

Residues 166 to 168 (GRS), Ser-191, and Thr-232 each bind NADP(+).

It belongs to the tetrahydrofolate dehydrogenase/cyclohydrolase family. As to quaternary structure, homodimer.

The catalysed reaction is (6R)-5,10-methylene-5,6,7,8-tetrahydrofolate + NADP(+) = (6R)-5,10-methenyltetrahydrofolate + NADPH. The enzyme catalyses (6R)-5,10-methenyltetrahydrofolate + H2O = (6R)-10-formyltetrahydrofolate + H(+). It functions in the pathway one-carbon metabolism; tetrahydrofolate interconversion. In terms of biological role, catalyzes the oxidation of 5,10-methylenetetrahydrofolate to 5,10-methenyltetrahydrofolate and then the hydrolysis of 5,10-methenyltetrahydrofolate to 10-formyltetrahydrofolate. In Chloroflexus aggregans (strain MD-66 / DSM 9485), this protein is Bifunctional protein FolD.